Reading from the N-terminus, the 133-residue chain is ATP synthase epsilon chain (133 aa).

Belongs to the ATPase epsilon chain family. F-type ATPases have 2 components, CF(1) - the catalytic core - and CF(0) - the membrane proton channel. CF(1) has five subunits: alpha(3), beta(3), gamma(1), delta(1), epsilon(1). CF(0) has three main subunits: a, b and c.

The protein localises to the cell membrane. Produces ATP from ADP in the presence of a proton gradient across the membrane. This chain is ATP synthase epsilon chain, found in Lawsonia intracellularis (strain PHE/MN1-00).